We begin with the raw amino-acid sequence, 372 residues long: ATP phosphoribosyltransferase regulatory subunit (372 aa).

It belongs to the class-II aminoacyl-tRNA synthetase family. HisZ subfamily. Heteromultimer composed of HisG and HisZ subunits.

The protein localises to the cytoplasm. It participates in amino-acid biosynthesis; L-histidine biosynthesis; L-histidine from 5-phospho-alpha-D-ribose 1-diphosphate: step 1/9. Required for the first step of histidine biosynthesis. May allow the feedback regulation of ATP phosphoribosyltransferase activity by histidine. The sequence is that of ATP phosphoribosyltransferase regulatory subunit from Rhizobium rhizogenes (strain K84 / ATCC BAA-868) (Agrobacterium radiobacter).